An 88-amino-acid polypeptide reads, in one-letter code: Small ribosomal subunit protein bS18A (88 aa).

Belongs to the bacterial ribosomal protein bS18 family. As to quaternary structure, part of the 30S ribosomal subunit. Forms a tight heterodimer with protein bS6.

Functionally, binds as a heterodimer with protein bS6 to the central domain of the 16S rRNA, where it helps stabilize the platform of the 30S subunit. The chain is Small ribosomal subunit protein bS18A from Mycolicibacterium gilvum (strain PYR-GCK) (Mycobacterium gilvum (strain PYR-GCK)).